We begin with the raw amino-acid sequence, 572 residues long: Nuclear hormone receptor family member nhr-25 (572 aa).

The segment at residues 15-90 is a DNA-binding region (nuclear receptor); the sequence is GEMCPVCGDR…MGMKMEAVRA (76 aa). 2 NR C4-type zinc fingers span residues 18–38 and 54–78; these read CPVC…CESC and CSAE…FQKC. Residues 307–567 form the NR LBD domain; the sequence is PTEKTVDHFY…PTPQATYTAV (261 aa).

Belongs to the nuclear hormone receptor family. Interacts with lin-39. Interacts with nob-1. As to expression, expressed in the epidermis, the developing somatic gonad, and a subset of other epithelial cells.

The protein resides in the nucleus. Functionally, orphan nuclear receptor and probable transcription activator, required during development. Plays a role in male tail tip morphogenesis regulating the expression of the transcription factor dmd-3 in a negative feedback loop. Regulates vulval precursor cell (VPC) differentiation, in concert with homeobox protein lin-39. Involved in promoting embryogenesis, in concert with homeobox protein nob-1. May play a role in modulation of lifespan and immunity. This chain is Nuclear hormone receptor family member nhr-25, found in Caenorhabditis elegans.